The primary structure comprises 266 residues: Na(+)-translocating NADH-quinone reductase subunit C (266 aa).

The chain crosses the membrane as a helical span at residues 16-36 (LLVVVILCLVCSVVVAGAAVG). T232 is subject to FMN phosphoryl threonine.

This sequence belongs to the NqrC family. As to quaternary structure, composed of six subunits; NqrA, NqrB, NqrC, NqrD, NqrE and NqrF. FMN is required as a cofactor.

Its subcellular location is the cell inner membrane. The enzyme catalyses a ubiquinone + n Na(+)(in) + NADH + H(+) = a ubiquinol + n Na(+)(out) + NAD(+). NQR complex catalyzes the reduction of ubiquinone-1 to ubiquinol by two successive reactions, coupled with the transport of Na(+) ions from the cytoplasm to the periplasm. NqrA to NqrE are probably involved in the second step, the conversion of ubisemiquinone to ubiquinol. The sequence is that of Na(+)-translocating NADH-quinone reductase subunit C from Yersinia pestis.